The following is a 278-amino-acid chain: Formamidopyrimidine-DNA glycosylase (278 aa).

P2 acts as the Schiff-base intermediate with DNA in catalysis. E3 acts as the Proton donor in catalysis. K59 acts as the Proton donor; for beta-elimination activity in catalysis. DNA contacts are provided by H93, R112, and R153. An FPG-type zinc finger spans residues 238–272 (NVYDRAGEPCPRCQSTIERIVVAQRSTYFCPTCQI). R262 (proton donor; for delta-elimination activity) is an active-site residue.

It belongs to the FPG family. As to quaternary structure, monomer. Zn(2+) is required as a cofactor.

It carries out the reaction Hydrolysis of DNA containing ring-opened 7-methylguanine residues, releasing 2,6-diamino-4-hydroxy-5-(N-methyl)formamidopyrimidine.. It catalyses the reaction 2'-deoxyribonucleotide-(2'-deoxyribose 5'-phosphate)-2'-deoxyribonucleotide-DNA = a 3'-end 2'-deoxyribonucleotide-(2,3-dehydro-2,3-deoxyribose 5'-phosphate)-DNA + a 5'-end 5'-phospho-2'-deoxyribonucleoside-DNA + H(+). In terms of biological role, involved in base excision repair of DNA damaged by oxidation or by mutagenic agents. Acts as a DNA glycosylase that recognizes and removes damaged bases. Has a preference for oxidized purines, such as 7,8-dihydro-8-oxoguanine (8-oxoG). Has AP (apurinic/apyrimidinic) lyase activity and introduces nicks in the DNA strand. Cleaves the DNA backbone by beta-delta elimination to generate a single-strand break at the site of the removed base with both 3'- and 5'-phosphates. The polypeptide is Formamidopyrimidine-DNA glycosylase (Chloroflexus aurantiacus (strain ATCC 29366 / DSM 635 / J-10-fl)).